The sequence spans 222 residues: Triosephosphate isomerase (222 aa).

9-11 is a substrate binding site; sequence NLK. The Electrophile role is filled by histidine 93. The Proton acceptor role is filled by glutamate 141. Residues isoleucine 146, glycine 181, and 202–203 contribute to the substrate site; that span reads AS.

The protein belongs to the triosephosphate isomerase family. In terms of assembly, homotetramer; dimer of dimers.

The protein resides in the cytoplasm. The enzyme catalyses D-glyceraldehyde 3-phosphate = dihydroxyacetone phosphate. It functions in the pathway carbohydrate biosynthesis; gluconeogenesis. It participates in carbohydrate degradation; glycolysis; D-glyceraldehyde 3-phosphate from glycerone phosphate: step 1/1. In terms of biological role, involved in the gluconeogenesis. Catalyzes stereospecifically the conversion of dihydroxyacetone phosphate (DHAP) to D-glyceraldehyde-3-phosphate (G3P). The chain is Triosephosphate isomerase from Methanoculleus marisnigri (strain ATCC 35101 / DSM 1498 / JR1).